The primary structure comprises 258 residues: Calcium release-activated calcium channel protein 1 (258 aa).

At 1-63 (MYPECGVETK…SRAKLKASSR (63 aa)) the chain is on the cytoplasmic side. The helical transmembrane segment at 64 to 81 (TSALLSGFAMVAMVEVQL) threads the bilayer. Topologically, residues 82–91 (EPNHAYPPGL) are extracellular. The helical transmembrane segment at 92-112 (LIAFSACTTVLVAVHLFALMV) threads the bilayer. Topologically, residues 113–145 (STCILPNIEAVSNVHNLNSVKESPHERMHHHIE) are cytoplasmic. Residues 146 to 166 (LAWAFSTVIGTLLFLAEVVLL) form a helical membrane-spanning segment. Residues 167–192 (CWVKFLPVNSPKISSNETSAVSSGQA) are Extracellular-facing. The N-linked (GlcNAc...) asparagine glycan is linked to asparagine 182. A helical transmembrane segment spans residues 193-213 (AAITSTAIMVPFGLVFIVFAV). Residues 214–258 (HFYRSLVSHKTDRQFQELNELAELAQLQDQLDHRGDPVQSPVHYA) lie on the Cytoplasmic side of the membrane.

The protein belongs to the Orai family.

The protein resides in the cell membrane. In terms of biological role, ca(2+) release-activated Ca(2+) (CRAC) channel subunit which mediates Ca(2+) influx following depletion of intracellular Ca(2+) stores. This Xenopus laevis (African clawed frog) protein is Calcium release-activated calcium channel protein 1 (orai1).